The chain runs to 74 residues: uncharacterized protein (74 aa).

Positions 29–63 (LNSKKSALQKDKELQQQAKAQESALAGEELRRRAL) form a coiled coil.

This is an uncharacterized protein from Pseudoalteromonas phage PM2 (Bacteriophage PM2).